Consider the following 80-residue polypeptide: Small ribosomal subunit protein uS17 (80 aa).

It belongs to the universal ribosomal protein uS17 family. In terms of assembly, part of the 30S ribosomal subunit.

In terms of biological role, one of the primary rRNA binding proteins, it binds specifically to the 5'-end of 16S ribosomal RNA. This Microcystis aeruginosa (strain NIES-843 / IAM M-2473) protein is Small ribosomal subunit protein uS17.